The chain runs to 31 residues: Cytochrome b6-f complex subunit 6 (31 aa).

Residues 4-24 (VIAYLGLLASVLIGTIVIYLG) traverse the membrane as a helical segment.

This sequence belongs to the PetL family. The 4 large subunits of the cytochrome b6-f complex are cytochrome b6, subunit IV (17 kDa polypeptide, PetD), cytochrome f and the Rieske protein, while the 4 small subunits are PetG, PetL, PetM and PetN. The complex functions as a dimer.

Its subcellular location is the plastid. It localises to the chloroplast thylakoid membrane. Functionally, component of the cytochrome b6-f complex, which mediates electron transfer between photosystem II (PSII) and photosystem I (PSI), cyclic electron flow around PSI, and state transitions. PetL is important for photoautotrophic growth as well as for electron transfer efficiency and stability of the cytochrome b6-f complex. The chain is Cytochrome b6-f complex subunit 6 from Oltmannsiellopsis viridis (Marine flagellate).